The primary structure comprises 168 residues: Shikimate kinase (168 aa).

10–15 (GVGKTT) contacts ATP. T14 serves as a coordination point for Mg(2+). Substrate contacts are provided by D32, R56, and G77. R115 is an ATP binding site. R133 contacts substrate.

It belongs to the shikimate kinase family. In terms of assembly, monomer. Requires Mg(2+) as cofactor.

It is found in the cytoplasm. It catalyses the reaction shikimate + ATP = 3-phosphoshikimate + ADP + H(+). It functions in the pathway metabolic intermediate biosynthesis; chorismate biosynthesis; chorismate from D-erythrose 4-phosphate and phosphoenolpyruvate: step 5/7. Catalyzes the specific phosphorylation of the 3-hydroxyl group of shikimic acid using ATP as a cosubstrate. The polypeptide is Shikimate kinase (Macrococcus caseolyticus (strain JCSC5402) (Macrococcoides caseolyticum)).